A 126-amino-acid polypeptide reads, in one-letter code: Large ribosomal subunit protein bL17 (126 aa).

This sequence belongs to the bacterial ribosomal protein bL17 family. As to quaternary structure, part of the 50S ribosomal subunit. Contacts protein L32.

The sequence is that of Large ribosomal subunit protein bL17 from Xylella fastidiosa (strain Temecula1 / ATCC 700964).